Reading from the N-terminus, the 262-residue chain is Biotin carboxyl carrier protein of acetyl-CoA carboxylase, chloroplastic (262 aa).

Residues 1 to 47 constitute a chloroplast transit peptide; the sequence is MASSLAPATKAATNLRLTHSLRFSPKPNNLRFATKPGNTLLCTRVKA. Disordered regions lie at residues 53-84 and 125-185; these read ALDS…PSSS and IRKK…KSSL. Residues 132–160 show a composition bias toward pro residues; the sequence is PQPPPAPQPSVVYSPPPPALPPPPVPAST. Residues 161–185 show a composition bias toward low complexity; the sequence is PAPTLARATPTPTSAPAVKSAKSSL. Residues 185–261 form the Biotinyl-binding domain; that stretch reads LPPLKSPMAG…SVDTPLFVIQ (77 aa). N6-biotinyllysine is present on lysine 227.

Its subcellular location is the plastid. It localises to the chloroplast. It participates in lipid metabolism; fatty acid biosynthesis. This protein is a component of the acetyl coenzyme A carboxylase complex; first, biotin carboxylase catalyzes the carboxylation of the carrier protein and then the transcarboxylase transfers the carboxyl group to form malonyl-CoA. The polypeptide is Biotin carboxyl carrier protein of acetyl-CoA carboxylase, chloroplastic (ACCB-1) (Glycine max (Soybean)).